Here is a 274-residue protein sequence, read N- to C-terminus: Shikimate dehydrogenase (NADP(+)) (274 aa).

Shikimate is bound by residues 14 to 16 (SQS) and threonine 61. Lysine 65 (proton acceptor) is an active-site residue. Residues asparagine 86 and aspartate 102 each coordinate shikimate. NADP(+) is bound by residues 128–132 (GAGGA), 151–156 (NRTVEK), and leucine 215. Tyrosine 217 contacts shikimate. Glycine 239 contributes to the NADP(+) binding site.

It belongs to the shikimate dehydrogenase family. As to quaternary structure, homodimer.

The enzyme catalyses shikimate + NADP(+) = 3-dehydroshikimate + NADPH + H(+). Its pathway is metabolic intermediate biosynthesis; chorismate biosynthesis; chorismate from D-erythrose 4-phosphate and phosphoenolpyruvate: step 4/7. In terms of biological role, involved in the biosynthesis of the chorismate, which leads to the biosynthesis of aromatic amino acids. Catalyzes the reversible NADPH linked reduction of 3-dehydroshikimate (DHSA) to yield shikimate (SA). The protein is Shikimate dehydrogenase (NADP(+)) of Proteus mirabilis (strain HI4320).